The sequence spans 276 residues: Halorhodopsin (276 aa).

A propeptide spanning residues 1-21 (MTAASTTATTMLQATQSDVLQ) is cleaved from the precursor. Residues 22–25 (EIQS) are Extracellular-facing. Residues 26–51 (NFLLNSSIWVNIALAGVVILLFVAMG) traverse the membrane as a helical segment. Over 52–57 (RDIESP) the chain is Cytoplasmic. Residues 58–81 (RAKLIWVATMLVPLVSISSYAGLA) form a helical membrane-spanning segment. Over 82-105 (SGLTVGFLQMPPGHALAGQEVLSP) the chain is Extracellular. The helical transmembrane segment at 106–127 (WGRYLTWTFSTPMILLALGLLA) threads the bilayer. Over 128–130 (DTD) the chain is Cytoplasmic. The helical transmembrane segment at 131 to 154 (IASLFTAITMDIGMCVTGLAAALI) threads the bilayer. Topologically, residues 155-157 (TSS) are extracellular. The helical transmembrane segment at 158–180 (HLLRWVFYGISCAFFVAVLYVLL) threads the bilayer. At 181 to 192 (VQWPADAEAAGT) the chain is on the cytoplasmic side. A helical transmembrane segment spans residues 193–216 (SEIFGTLKILTVVLWLGYPILWAL). Topologically, residues 217 to 225 (GSEGVALLS) are extracellular. A helical transmembrane segment spans residues 226–254 (VGVTSWGYSGLDILAKYVFAFLLLRWVAA). Residue K241 is modified to N6-(retinylidene)lysine. The Cytoplasmic portion of the chain corresponds to 255-276 (NEGAVSGSGMSIGSGGAAPADD).

The protein belongs to the archaeal/bacterial/fungal opsin family.

The protein resides in the cell membrane. Functionally, light-driven chloride pump. The chain is Halorhodopsin (hop) from Halobacterium halobium (strain port).